A 249-amino-acid polypeptide reads, in one-letter code: Large ribosomal subunit protein uL30A (249 aa).

Belongs to the universal ribosomal protein uL30 family. In terms of assembly, component of the small ribosomal subunit (SSU). Mature yeast ribosomes consist of a small (40S) and a large (60S) subunit. The 40S small subunit contains 1 molecule of ribosomal RNA (18S rRNA) and at least 33 different proteins. The large 60S subunit contains 3 rRNA molecules (25S, 5.8S and 5S rRNA) and at least 46 different proteins.

The protein resides in the cytoplasm. It localises to the nucleus. It is found in the nucleolus. Its function is as follows. Component of the ribosome, a large ribonucleoprotein complex responsible for the synthesis of proteins in the cell. The small ribosomal subunit (SSU) binds messenger RNAs (mRNAs) and translates the encoded message by selecting cognate aminoacyl-transfer RNA (tRNA) molecules. The large subunit (LSU) contains the ribosomal catalytic site termed the peptidyl transferase center (PTC), which catalyzes the formation of peptide bonds, thereby polymerizing the amino acids delivered by tRNAs into a polypeptide chain. The nascent polypeptides leave the ribosome through a tunnel in the LSU and interact with protein factors that function in enzymatic processing, targeting, and the membrane insertion of nascent chains at the exit of the ribosomal tunnel. The polypeptide is Large ribosomal subunit protein uL30A (rlp7) (Schizosaccharomyces pombe (strain 972 / ATCC 24843) (Fission yeast)).